We begin with the raw amino-acid sequence, 85 residues long: Turmerin (85 aa).

Post-translationally, the N-terminus is blocked.

Functionally, inhibition of trypsin. Has anticarcinogenic activity, prevents transformation of DMBA-treated JB6 cells. Has antipromoter activity, prevents promotion by tetradecanoyl phorbal acetate (TPA) in JB6 cells. Prevents tertiary butyl hydroperoxide-induced mutagenesis. Protects AT base pairs and shows antimutagenesis activity in TA102 and TA104 S.typhimurium mutagenesis tests. Inhibits paw edema formation induced by phospholipase A2 in Swiss Wistar mice. Prevents the release of arachidonate, the parent compound for the synthesis of prostaglandins and prostacyclins. Has antimalarial activity, kills P.falciparum. Has antivenom activity, nullifies the lethal effects of N.naja venom and inhibits phospholipase A2 present in N.naja venom. Has antifungal activity, inhibits cilia formation by A.niger. Is not toxic or allergenic. This is Turmerin from Curcuma longa (Turmeric).